Here is an 88-residue protein sequence, read N- to C-terminus: Large ribosomal subunit protein bL27 (88 aa).

Residues 1 to 25 (MAHKKGASSSRNGRDSNAQRLGVKR) form a disordered region. Polar residues predominate over residues 7–19 (ASSSRNGRDSNAQ).

The protein belongs to the bacterial ribosomal protein bL27 family.

The polypeptide is Large ribosomal subunit protein bL27 (Nocardia farcinica (strain IFM 10152)).